The sequence spans 409 residues: Patellin-6 (409 aa).

The CRAL-TRIO domain occupies 116-294; that stretch reads EKLTEEDLGF…QYGGLSRPTD (179 aa). A GOLD domain is found at 270–404; the sequence is AETLYKFIRP…VAAYRYTVRK (135 aa).

Belongs to the patellin family.

It is found in the membrane. The protein resides in the cytoplasm. In terms of biological role, carrier protein that may be involved in membrane-trafficking events associated with cell-plate formation during cytokinesis. Binds to some hydrophobic molecules such as phosphoinositides and promotes their transfer between the different cellular sites. The polypeptide is Patellin-6 (PATL6) (Arabidopsis thaliana (Mouse-ear cress)).